The sequence spans 381 residues: MGPVGAEADENQTVEVKVEPYGPGHTTPRGELPPDPEPELIDSTKLVEVQVILILAYCSIILLGVVGNSLVIHVVIKFKSMRTVTNFFIANLAVADLLVNTLCLPFTLTYTLMGEWKMGPVLCHLVPYAQGLAVQVSTITLTVIALDRHRCIVYHLESKISKRISFLIIGLAWGISALLASPLAIFREYSLIEIIPDFEIVACTEKWPGEEKSVYGTVYSLSTLLILYVLPLGIISFSYTRIWSKLRNHVSPGAASDHYHQRRHKMTKMLVCVVVVFAVSWLPLHAFQLAVDIDSHVLDLKEYKLIFTVFHIIAMCSTFANPLLYGWMNSNYRKAFLSAFRCEQRLDAIHSEVSMTFKAKKNLEVKKNNGPTDSFSEATNV.

Positions 1–37 (MGPVGAEADENQTVEVKVEPYGPGHTTPRGELPPDPE) are disordered. The Extracellular segment spans residues 1–51 (MGPVGAEADENQTVEVKVEPYGPGHTTPRGELPPDPEPELIDSTKLVEVQV). N-linked (GlcNAc...) asparagine glycosylation is present at Asn-11. Residues 52–72 (ILILAYCSIILLGVVGNSLVI) form a helical membrane-spanning segment. Residues 73–86 (HVVIKFKSMRTVTN) lie on the Cytoplasmic side of the membrane. A helical membrane pass occupies residues 87-107 (FFIANLAVADLLVNTLCLPFT). Over 108–124 (LTYTLMGEWKMGPVLCH) the chain is Extracellular. Cysteines 123 and 203 form a disulfide. The helical transmembrane segment at 125–145 (LVPYAQGLAVQVSTITLTVIA) threads the bilayer. The Cytoplasmic portion of the chain corresponds to 146–165 (LDRHRCIVYHLESKISKRIS). Residues 166-186 (FLIIGLAWGISALLASPLAIF) form a helical membrane-spanning segment. The Extracellular portion of the chain corresponds to 187-216 (REYSLIEIIPDFEIVACTEKWPGEEKSVYG). The chain crosses the membrane as a helical span at residues 217–237 (TVYSLSTLLILYVLPLGIISF). Over 238–268 (SYTRIWSKLRNHVSPGAASDHYHQRRHKMTK) the chain is Cytoplasmic. The chain crosses the membrane as a helical span at residues 269–289 (MLVCVVVVFAVSWLPLHAFQL). The Extracellular portion of the chain corresponds to 290–304 (AVDIDSHVLDLKEYK). The helical transmembrane segment at 305 to 325 (LIFTVFHIIAMCSTFANPLLY) threads the bilayer. Over 326–381 (GWMNSNYRKAFLSAFRCEQRLDAIHSEVSMTFKAKKNLEVKKNNGPTDSFSEATNV) the chain is Cytoplasmic. A lipid anchor (S-palmitoyl cysteine) is attached at Cys-342.

Belongs to the G-protein coupled receptor 1 family.

Its subcellular location is the cell membrane. Receptor for neuropeptide Y and peptide YY. This chain is Neuropeptide Y receptor type 2 (Npy2r), found in Mus musculus (Mouse).